The sequence spans 180 residues: ATP synthase subunit delta (180 aa).

The protein belongs to the ATPase delta chain family. F-type ATPases have 2 components, F(1) - the catalytic core - and F(0) - the membrane proton channel. F(1) has five subunits: alpha(3), beta(3), gamma(1), delta(1), epsilon(1). F(0) has three main subunits: a(1), b(2) and c(10-14). The alpha and beta chains form an alternating ring which encloses part of the gamma chain. F(1) is attached to F(0) by a central stalk formed by the gamma and epsilon chains, while a peripheral stalk is formed by the delta and b chains.

The protein localises to the cell inner membrane. F(1)F(0) ATP synthase produces ATP from ADP in the presence of a proton or sodium gradient. F-type ATPases consist of two structural domains, F(1) containing the extramembraneous catalytic core and F(0) containing the membrane proton channel, linked together by a central stalk and a peripheral stalk. During catalysis, ATP synthesis in the catalytic domain of F(1) is coupled via a rotary mechanism of the central stalk subunits to proton translocation. Its function is as follows. This protein is part of the stalk that links CF(0) to CF(1). It either transmits conformational changes from CF(0) to CF(1) or is implicated in proton conduction. The polypeptide is ATP synthase subunit delta (Legionella pneumophila subsp. pneumophila (strain Philadelphia 1 / ATCC 33152 / DSM 7513)).